A 187-amino-acid chain; its full sequence is Lysozyme C-like protein DDB_G0288143 (187 aa).

Positions 1 to 23 (MKVSNLISTITIASALCLSLTNA) are cleaved as a signal peptide. 3 disulfide bridges follow: Cys50-Cys125, Cys74-Cys82, and Cys78-Cys97. Glu55 is a catalytic residue. The disordered stretch occupies residues 133-187 (QHGSHSSTSRDSSSSSSRDSTGTGYSSSGSGTSGSGSNSGQTGHFIPGQSGHGLN). The segment covering 136–175 (SHSSTSRDSSSSSSRDSTGTGYSSSGSGTSGSGSNSGQTG) has biased composition (low complexity).

The protein belongs to the glycosyl hydrolase 22 family.

The protein is Lysozyme C-like protein DDB_G0288143 of Dictyostelium discoideum (Social amoeba).